A 789-amino-acid chain; its full sequence is MFNLIRKSTEWGGKTLVLESGKIARQANGAVVVTYGGTTVLSTVVAGKAKEPVDFLPLTVQFVAKSYAVGKIPGGFLKREGKPSDRETLISRLIDRSIRPLFPSGFYDEVSIVCNLLSYDTVTPPEVTALIGATAALAISGVPFNGMVVGARVGYLLSEDKYLLNASADEMLSSSLDLFLSGNKDSVLMVESEASELSESQMLGAISFGHQNCQEVIKLIEEFREESGILPFGFIPHDITSLVDDIASSYTESFSIAYSNIVKKERVLELEKLRDQVLSDMLAKYEQPNGNLQCQYSSQDIISALKSFERSLVRSKIIETSSRIDGRAFNGIRDIEIEIDVLPKTHGSALFTRGNTQALVVTALGTPQDEQIVDDLDGDRRENFLLHYNFPPYAVGESAALRAPGRREIGHGKLAWKAIRYVLPEKSDFPYTIRVVSEITESDGSSSMATVCGASLALMDTGVPIKAPVAGIAMGLIKEGEKFIILSDILGDEDHLGDMDFKVAGTSSGITALQMDMKISGISIEVIEKSLLQAKDGRMHILDKMNLVIQESRECIKNHAPRIESIFINKDKIRNVIGSGGKNIREICEKTGARVEIMQDGTVMIYAINNDAVEYAKNMIMDIVSEPEIGKVFDGTVIEIVKFGAFVSFLGGKRGLIHISEIKNEHINAVGSVISVNDKVKVLVIGIDREYVQLSMRRVDQETGEPIDGELYNIRKTNSDSDDSFLSSGSVNNRHGSEKKRRGSGRSRRSSGGSSYHRDDLHNNGFGNGNRSFNDNRNGNEVPRKPRFF.

The Mg(2+) site is built by D494 and D500. One can recognise a KH domain in the interval 561-620; sequence PRIESIFINKDKIRNVIGSGGKNIREICEKTGARVEIMQDGTVMIYAINNDAVEYAKNMI. One can recognise an S1 motif domain in the interval 630-697; the sequence is GKVFDGTVIE…DREYVQLSMR (68 aa). Residues 709–789 form a disordered region; it reads GELYNIRKTN…NEVPRKPRFF (81 aa). Residues 737–749 show a composition bias toward basic residues; the sequence is SEKKRRGSGRSRR. Over residues 763 to 780 the composition is skewed to low complexity; the sequence is NNGFGNGNRSFNDNRNGN.

Belongs to the polyribonucleotide nucleotidyltransferase family. It depends on Mg(2+) as a cofactor.

It is found in the cytoplasm. The catalysed reaction is RNA(n+1) + phosphate = RNA(n) + a ribonucleoside 5'-diphosphate. Its function is as follows. Involved in mRNA degradation. Catalyzes the phosphorolysis of single-stranded polyribonucleotides processively in the 3'- to 5'-direction. This chain is Polyribonucleotide nucleotidyltransferase, found in Ehrlichia ruminantium (strain Welgevonden).